A 1478-amino-acid chain; its full sequence is Fanconi anemia group D2 protein homolog (1478 aa).

Positions 33–53 are disordered; sequence NISVESSSGGSEENIPASQEH. Residues 35 to 45 are compositionally biased toward low complexity; that stretch reads SVESSSGGSEE. K595 is covalently cross-linked (Glycyl lysine isopeptide (Lys-Gly) (interchain with G-Cter in ubiquitin)). Disordered regions lie at residues 896-918 and 1420-1478; these read NQNQ…PEPD and TPRS…SKCF. The span at 1429-1442 shows a compositional bias: acidic residues; the sequence is ENSDDELPADDTSV. Over residues 1468–1478 the composition is skewed to basic residues; it reads RSKSSSRSKCF.

The protein belongs to the Fanconi anemia protein FANCD2 family. In terms of assembly, homodimer; cannot be ubiquitinated and does not bind DNA. Part of a Fanci-Fancd2 heterodimeric complex that binds and scans dsDNA for DNA damage. Interacts with Fancl (via C-terminus). Post-translationally, monoubiquitinated by Fancl in response to ionising radiation.

It is found in the nucleus. Functionally, required for maintenance of chromosomal stability. Together with Fancl, and probably Fanci, involved in DNA repair of damage caused by agents that induce interstrand cross-links but not agents that cause double strand breaks. Required for S phase checkpoint activation in response to ionizing radiation induced DNA damage. This is Fanconi anemia group D2 protein homolog from Drosophila melanogaster (Fruit fly).